A 640-amino-acid chain; its full sequence is RecBCD enzyme subunit RecD (640 aa).

194-201 is a binding site for ATP; sequence GGPGTGKT.

It belongs to the RecD family. In terms of assembly, heterotrimer of RecB, RecC and RecD. All subunits contribute to DNA-binding.

It catalyses the reaction Couples ATP hydrolysis with the unwinding of duplex DNA at the replication fork by translocating in the 5'-3' direction. This creates two antiparallel DNA single strands (ssDNA). The leading ssDNA polymer is the template for DNA polymerase III holoenzyme which synthesizes a continuous strand.. It carries out the reaction ATP + H2O = ADP + phosphate + H(+). In terms of biological role, a helicase/nuclease that prepares dsDNA breaks (DSB) for recombinational DNA repair. Binds to DSBs and unwinds DNA via a highly rapid and processive ATP-dependent bidirectional helicase activity. Unwinds dsDNA until it encounters a Chi (crossover hotspot instigator) sequence from the 3' direction. Cuts ssDNA a few nucleotides 3' to the Chi site. The properties and activities of the enzyme are changed at Chi. The Chi-altered holoenzyme produces a long 3'-ssDNA overhang and facilitates RecA-binding to the ssDNA for homologous DNA recombination and repair. Holoenzyme degrades any linearized DNA that is unable to undergo homologous recombination. In the holoenzyme this subunit has ssDNA-dependent ATPase and 5'-3' helicase activity. When added to pre-assembled RecBC greatly stimulates nuclease activity and augments holoenzyme processivity. Negatively regulates the RecA-loading ability of RecBCD. In Haemophilus influenzae (strain ATCC 51907 / DSM 11121 / KW20 / Rd), this protein is RecBCD enzyme subunit RecD.